The sequence spans 251 residues: 2,3-bisphosphoglycerate-dependent phosphoglycerate mutase (251 aa).

Residues arginine 13–asparagine 20, threonine 26–glycine 27, arginine 65, glutamate 92–tyrosine 95, lysine 103, arginine 119–arginine 120, and glycine 186–asparagine 187 each bind substrate. Residue histidine 14 is the Tele-phosphohistidine intermediate of the active site. Residue glutamate 92 is the Proton donor/acceptor of the active site.

Belongs to the phosphoglycerate mutase family. BPG-dependent PGAM subfamily.

It carries out the reaction (2R)-2-phosphoglycerate = (2R)-3-phosphoglycerate. Its pathway is carbohydrate degradation; glycolysis; pyruvate from D-glyceraldehyde 3-phosphate: step 3/5. Functionally, catalyzes the interconversion of 2-phosphoglycerate and 3-phosphoglycerate. The chain is 2,3-bisphosphoglycerate-dependent phosphoglycerate mutase from Rhodococcus jostii (strain RHA1).